A 511-amino-acid polypeptide reads, in one-letter code: Lysine--tRNA ligase (511 aa).

The segment at 1-21 (MHTEKDPNKNTPEQQTPISLN) is disordered. Residues 9–21 (KNTPEQQTPISLN) are compositionally biased toward polar residues. The Mg(2+) site is built by glutamate 422 and glutamate 429.

It belongs to the class-II aminoacyl-tRNA synthetase family. In terms of assembly, homodimer. Requires Mg(2+) as cofactor.

Its subcellular location is the cytoplasm. The catalysed reaction is tRNA(Lys) + L-lysine + ATP = L-lysyl-tRNA(Lys) + AMP + diphosphate. This chain is Lysine--tRNA ligase, found in Pelodictyon phaeoclathratiforme (strain DSM 5477 / BU-1).